The sequence spans 186 residues: ATP-dependent protease subunit HslV (186 aa).

Residue threonine 14 is part of the active site. Positions 168, 171, and 174 each coordinate Na(+).

This sequence belongs to the peptidase T1B family. HslV subfamily. As to quaternary structure, a double ring-shaped homohexamer of HslV is capped on each side by a ring-shaped HslU homohexamer. The assembly of the HslU/HslV complex is dependent on binding of ATP.

Its subcellular location is the cytoplasm. It carries out the reaction ATP-dependent cleavage of peptide bonds with broad specificity.. With respect to regulation, allosterically activated by HslU binding. Functionally, protease subunit of a proteasome-like degradation complex believed to be a general protein degrading machinery. This is ATP-dependent protease subunit HslV from Methylorubrum extorquens (strain CM4 / NCIMB 13688) (Methylobacterium extorquens).